Consider the following 88-residue polypeptide: Putative regulatory protein Ava_1474 (88 aa).

It belongs to the RemA family.

The protein is Putative regulatory protein Ava_1474 of Trichormus variabilis (strain ATCC 29413 / PCC 7937) (Anabaena variabilis).